A 1330-amino-acid chain; its full sequence is Kinectin (1330 aa).

Residues 1–6 (MEFYES) are Cytoplasmic-facing. The helical; Signal-anchor for type II membrane protein transmembrane segment at 7–29 (TYFIVLIPSVVITVIFLFFWLFM) threads the bilayer. Over 30–1330 (KETLYDEVLA…KEKEHYQVLE (1301 aa)) the chain is Lumenal. Disordered regions lie at residues 49-81 (PTKT…ESVP) and 108-218 (SSSV…KQKA). Serine 75 and serine 77 each carry phosphoserine. Residues 113 to 122 (ERKKKEKKHK) show a composition bias toward basic residues. Positions 123–135 (PVLEEQVTKESDV) are enriched in basic and acidic residues. At threonine 153 the chain carries Phosphothreonine. Residue serine 156 is modified to Phosphoserine. Residues 161–171 (SKKKPGQKKSK) show a composition bias toward basic residues. Asparagine 172, asparagine 435, asparagine 772, asparagine 904, and asparagine 1055 each carry an N-linked (GlcNAc...) asparagine glycan. Basic and acidic residues predominate over residues 172-182 (NGSDDQDKKVE). Residues 332–1329 (HQLQEKDKLL…TKEKEHYQVL (998 aa)) are a coiled coil. Position 1085 is a phosphoserine (serine 1085). Residue asparagine 1236 is glycosylated (N-linked (GlcNAc...) asparagine). At serine 1286 the chain carries Phosphoserine. Residue asparagine 1302 is glycosylated (N-linked (GlcNAc...) asparagine).

This sequence belongs to the kinectin family. Parallel homodimers formed between the membrane-bound and the cytosolic form, and also between 2 cytosolic forms. Expressed in male brain, heart, kidney, liver, lung, spleen and testis.

The protein resides in the endoplasmic reticulum membrane. Its function is as follows. Receptor for kinesin thus involved in kinesin-driven vesicle motility. This Vulpes vulpes (Red fox) protein is Kinectin (KTN1).